We begin with the raw amino-acid sequence, 37 residues long: MKVRSGVKKICKKCTIIKRKGVNRVICEIPKHKQRQG.

It belongs to the bacterial ribosomal protein bL36 family.

The protein is Large ribosomal subunit protein bL36 of Mycoplasmopsis synoviae (strain 53) (Mycoplasma synoviae).